Consider the following 162-residue polypeptide: Small ribosomal subunit protein uS9 (162 aa).

It belongs to the universal ribosomal protein uS9 family.

This is Small ribosomal subunit protein uS9 from Parvibaculum lavamentivorans (strain DS-1 / DSM 13023 / NCIMB 13966).